Consider the following 121-residue polypeptide: Spermidine export protein MdtJ (121 aa).

4 helical membrane-spanning segments follow: residues 1 to 21 (MYIY…GTLS), 32 to 52 (GGFI…SFAV), 55 to 75 (IALG…ITLF), and 82 to 102 (ESLS…IVLI).

The protein belongs to the drug/metabolite transporter (DMT) superfamily. Small multidrug resistance (SMR) (TC 2.A.7.1) family. MdtJ subfamily. As to quaternary structure, forms a complex with MdtI.

The protein localises to the cell inner membrane. In terms of biological role, catalyzes the excretion of spermidine. The polypeptide is Spermidine export protein MdtJ (Escherichia coli O127:H6 (strain E2348/69 / EPEC)).